A 157-amino-acid chain; its full sequence is 3-dehydroquinate dehydratase (157 aa).

Catalysis depends on tyrosine 29, which acts as the Proton acceptor. Substrate is bound by residues asparagine 80, histidine 86, and aspartate 93. Catalysis depends on histidine 107, which acts as the Proton donor. Substrate-binding positions include isoleucine 108–serine 109 and arginine 118.

It belongs to the type-II 3-dehydroquinase family. As to quaternary structure, homododecamer.

The enzyme catalyses 3-dehydroquinate = 3-dehydroshikimate + H2O. It participates in metabolic intermediate biosynthesis; chorismate biosynthesis; chorismate from D-erythrose 4-phosphate and phosphoenolpyruvate: step 3/7. Its function is as follows. Catalyzes a trans-dehydration via an enolate intermediate. The polypeptide is 3-dehydroquinate dehydratase (aroQ) (Streptomyces coelicolor (strain ATCC BAA-471 / A3(2) / M145)).